Consider the following 426-residue polypeptide: 2-(3-amino-3-carboxypropyl)histidine synthase subunit 1 (426 aa).

3 residues coordinate [4Fe-4S] cluster: Cys133, Cys239, and Cys368.

This sequence belongs to the DPH1/DPH2 family. DPH1 subfamily. In terms of assembly, component of the 2-(3-amino-3-carboxypropyl)histidine synthase complex composed of DPH1, DPH2, DPH3 and a NADH-dependent reductase, predominantly CBR1. It depends on [4Fe-4S] cluster as a cofactor.

Its subcellular location is the cytoplasm. The enzyme catalyses L-histidyl-[translation elongation factor 2] + S-adenosyl-L-methionine = 2-[(3S)-amino-3-carboxypropyl]-L-histidyl-[translation elongation factor 2] + S-methyl-5'-thioadenosine + H(+). Its pathway is protein modification; peptidyl-diphthamide biosynthesis. Functionally, catalyzes the first step of diphthamide biosynthesis, a post-translational modification of histidine which occurs in elongation factor 2. DPH1 and DPH2 transfer a 3-amino-3-carboxypropyl (ACP) group from S-adenosyl-L-methionine (SAM) to a histidine residue, the reaction is assisted by a reduction system comprising DPH3 and a NADH-dependent reductase, predominantly CBR1. This chain is 2-(3-amino-3-carboxypropyl)histidine synthase subunit 1 (DPH1), found in Eremothecium gossypii (strain ATCC 10895 / CBS 109.51 / FGSC 9923 / NRRL Y-1056) (Yeast).